A 760-amino-acid polypeptide reads, in one-letter code: Forkhead box protein M1 (760 aa).

Disordered stretches follow at residues 1–54 (MRTS…AESS) and 95–167 (GKES…SYAG). 2 stretches are compositionally biased toward low complexity: residues 43–54 (PAQASQEVAESS) and 110–124 (SSGGPSSHPSQPQAH). A compositionally biased stretch (basic and acidic residues) spans 125–134 (SSRDSKRAEV). The segment covering 140–149 (GPKPAAKGVP) has biased composition (low complexity). Residues lysine 199 and lysine 323 each participate in a glycyl lysine isopeptide (Lys-Gly) (interchain with G-Cter in SUMO2) cross-link. The fork-head DNA-binding region spans 233-325 (ERPPYSYMAM…LTLDQVFKPL (93 aa)). Positions 323-348 (KPLEPGSPQSPEHLESQQKRPNPELH) are disordered. Position 329 is a phosphoserine (serine 329). Positions 334-348 (EHLESQQKRPNPELH) are enriched in basic and acidic residues. Lysine 354 participates in a covalent cross-link: Glycyl lysine isopeptide (Lys-Gly) (interchain with G-Cter in SUMO2). At serine 374 the chain carries Phosphoserine; by CHEK2. Glycyl lysine isopeptide (Lys-Gly) (interchain with G-Cter in SUMO2) cross-links involve residues lysine 420 and lysine 438. Disordered stretches follow at residues 500–560 (SWED…PDLF), 577–635 (ESSE…LDFS), and 660–709 (PLKS…IPSL). Serine 521 carries the phosphoserine modification. Over residues 531–542 (VTKRREKREVSR) the composition is skewed to basic and acidic residues. The segment covering 604–613 (PVSSTPSKSV) has biased composition (polar residues). A Phosphothreonine; by CDK1 modification is found at threonine 608. The residue at position 624 (threonine 624) is a Phosphothreonine. A phosphoserine; by PLK1 mark is found at serine 727 and serine 736.

Phosphorylated in M (mitotic) phase. Phosphorylation by the checkpoint kinase CHEK2 in response to DNA damage increases the FOXM1 protein stability probably stimulating the transcription of genes involved in DNA repair. Phosphorylated by CDK1 in late S and G2 phases, creating docking sites for the POLO box domains of PLK1. Subsequently, PLK1 binds and phosphorylates FOXM1, leading to activation of transcriptional activity and subsequent enhanced expression of key mitotic regulators. Phosphorylated by GSK3B leading to ubiquitination and proteasomal degradation. Expressed in fetal heart, brain, liver, lung, kidney and limb, but only in adult thymus. Appears to be expressed only in adult organs containing proliferating/cycling cells or in response to growth factors.

The protein localises to the nucleus. In terms of biological role, transcription factor regulating the expression of cell cycle genes essential for DNA replication and mitosis. Plays a role in the control of cell proliferation. Also plays a role in DNA break repair, participating in the DNA damage checkpoint response. Promotes transcription of PHB2. This chain is Forkhead box protein M1 (Foxm1), found in Mus musculus (Mouse).